The sequence spans 288 residues: Putative branched-chain-amino-acid aminotransferase (288 aa).

At K146 the chain carries N6-(pyridoxal phosphate)lysine.

The protein belongs to the class-IV pyridoxal-phosphate-dependent aminotransferase family. It depends on pyridoxal 5'-phosphate as a cofactor.

It catalyses the reaction L-leucine + 2-oxoglutarate = 4-methyl-2-oxopentanoate + L-glutamate. It carries out the reaction L-isoleucine + 2-oxoglutarate = (S)-3-methyl-2-oxopentanoate + L-glutamate. The enzyme catalyses L-valine + 2-oxoglutarate = 3-methyl-2-oxobutanoate + L-glutamate. It participates in amino-acid biosynthesis; L-isoleucine biosynthesis; L-isoleucine from 2-oxobutanoate: step 4/4. It functions in the pathway amino-acid biosynthesis; L-leucine biosynthesis; L-leucine from 3-methyl-2-oxobutanoate: step 4/4. Its pathway is amino-acid biosynthesis; L-valine biosynthesis; L-valine from pyruvate: step 4/4. In terms of biological role, acts on leucine, isoleucine and valine. This is Putative branched-chain-amino-acid aminotransferase (ilvE) from Methanocaldococcus jannaschii (strain ATCC 43067 / DSM 2661 / JAL-1 / JCM 10045 / NBRC 100440) (Methanococcus jannaschii).